The primary structure comprises 329 residues: uncharacterized protein (329 aa).

An SIS domain is found at 37–180 (LAEKILGHSG…AMLLFHSRGV (144 aa)). Residue 52 to 57 (GVGKSG) coordinates ATP. CBS domains are found at residues 206-265 (MFPK…GGEV) and 274-329 (MTAN…AGLL).

Belongs to the SIS family. GutQ/KpsF subfamily.

This is an uncharacterized protein from Chlamydia pneumoniae (Chlamydophila pneumoniae).